The sequence spans 405 residues: uncharacterized protein (405 aa).

The next 12 helical transmembrane spans lie at 3 to 23 (IIAK…PTTE), 42 to 62 (GITQ…ILTL), 73 to 93 (PIAL…IFAV), 95 to 115 (IEML…GSVI), 135 to 155 (SLSP…GYII), 162 to 182 (YVFV…YKVL), 209 to 229 (ILWL…GFFI), 248 to 268 (KLAF…GYLI), 280 to 300 (GLGF…AFIL), 309 to 329 (LAIA…NLLI), 346 to 366 (TAGS…TYLV), and 377 to 397 (FALL…CIWV).

Belongs to the major facilitator superfamily. Bcr/CmlA family.

The protein resides in the cell inner membrane. This is an uncharacterized protein from Rickettsia felis (strain ATCC VR-1525 / URRWXCal2) (Rickettsia azadi).